Here is a 1033-residue protein sequence, read N- to C-terminus: Ubiquitin carboxyl-terminal hydrolase 48 (1033 aa).

Residues 89 to 419 form the USP domain; that stretch reads VGLTNLGATC…NAYMLVYRLQ (331 aa). The Nucleophile role is filled by Cys98. The active-site Proton acceptor is the His351. DUSP domains follow at residues 457–552, 567–690, and 710–823; these read QSVA…KALC, NQLN…NKEC, and MMAS…RTRA. The segment at 610-639 is disordered; it reads EQDEDAEHSNGKLNGNAPNKDEVNEEKREE. Positions 878–920 are disordered; it reads APELNVSSSEAEEEREENKPEGEQDPDFNQSNGGAKRQKLSHQ. The Ubiquitin-like domain maps to 931-1007; sequence RRSTRHRKVR…ILLKADEPIA (77 aa).

This sequence belongs to the peptidase C19 family.

The protein resides in the cytoplasm. The protein localises to the nucleus. It catalyses the reaction Thiol-dependent hydrolysis of ester, thioester, amide, peptide and isopeptide bonds formed by the C-terminal Gly of ubiquitin (a 76-residue protein attached to proteins as an intracellular targeting signal).. In terms of biological role, recognizes and hydrolyzes the peptide bond at the C-terminal Gly of ubiquitin. Involved in the processing of poly-ubiquitin precursors as well as that of ubiquitinated proteins. This Gallus gallus (Chicken) protein is Ubiquitin carboxyl-terminal hydrolase 48 (USP48).